Here is a 107-residue protein sequence, read N- to C-terminus: Sperm-specific class P protein 34 (107 aa).

Residues 1–26 are disordered; sequence MINVDPPTGNYPATGGNSTHNITSES. Positions 1-107 constitute an MSP domain; it reads MINVDPPTGN…GEIIVKLIAA (107 aa). Polar residues predominate over residues 15–25; the sequence is GGNSTHNITSE.

As to expression, expressed at higher level in testis.

The polypeptide is Sperm-specific class P protein 34 (ssp-34) (Caenorhabditis elegans).